Reading from the N-terminus, the 300-residue chain is F-box/LRR-repeat protein 15 (300 aa).

Met-1 bears the N-acetylmethionine mark. The 48-residue stretch at 19 to 66 folds into the F-box domain; that stretch reads LLDLPWEDVLLPHILSRVPLRQLLRLQRVSRAFRALVQLHLAGLRRFD. Residues 113–269 are interaction with SMURF1; the sequence is NPQLRSVALA…EPSLSRLRKR (157 aa). LRR repeat units lie at residues 141 to 162, 167 to 188, 194 to 215, 220 to 241, and 246 to 267; these read RLQR…RGLA, ALEE…VYLA, GLRS…QELA, ELEH…RTLA, and ALRS…SRLR.

Belongs to the FBXL15 family. As to quaternary structure, part of the SCF (SKP1-CUL1-F-box) E3 ubiquitin-protein ligase complex SCF(FBXL15) composed of CUL1, SKP1, RBX1 and FBXL15.

It is found in the cytoplasm. The protein operates within protein modification; protein ubiquitination. In terms of biological role, substrate recognition component of a SCF (SKP1-CUL1-F-box protein) E3 ubiquitin-protein ligase complex which mediates the ubiquitination and subsequent proteasomal degradation of SMURF1, thereby acting as a positive regulator of the BMP signaling pathway. Required for dorsal/ventral pattern formation and bone mass maintenance. Also mediates ubiquitination of SMURF2 and WWP2. This Canis lupus familiaris (Dog) protein is F-box/LRR-repeat protein 15 (FBXL15).